The following is a 185-amino-acid chain: Translation initiation factor IF-3 (185 aa).

It belongs to the IF-3 family. In terms of assembly, monomer.

The protein localises to the cytoplasm. IF-3 binds to the 30S ribosomal subunit and shifts the equilibrium between 70S ribosomes and their 50S and 30S subunits in favor of the free subunits, thus enhancing the availability of 30S subunits on which protein synthesis initiation begins. This chain is Translation initiation factor IF-3, found in Coxiella burnetii (strain RSA 493 / Nine Mile phase I).